The primary structure comprises 329 residues: GTP 3',8-cyclase (329 aa).

Residues 1–229 (MNQIDYLRIS…EGQVRGNGPA (229 aa)) enclose the Radical SAM core domain. Residue R8 participates in GTP binding. C15 and C19 together coordinate [4Fe-4S] cluster. Position 21 (Y21) interacts with S-adenosyl-L-methionine. Residue C22 coordinates [4Fe-4S] cluster. Residue R60 participates in GTP binding. G64 is a binding site for S-adenosyl-L-methionine. T91 provides a ligand contact to GTP. S115 contacts S-adenosyl-L-methionine. K155 is a GTP binding site. Position 189 (M189) interacts with S-adenosyl-L-methionine. [4Fe-4S] cluster contacts are provided by C252 and C255. Residue 257–259 (RLR) coordinates GTP. C269 serves as a coordination point for [4Fe-4S] cluster.

It belongs to the radical SAM superfamily. MoaA family. Monomer and homodimer. [4Fe-4S] cluster is required as a cofactor.

The enzyme catalyses GTP + AH2 + S-adenosyl-L-methionine = (8S)-3',8-cyclo-7,8-dihydroguanosine 5'-triphosphate + 5'-deoxyadenosine + L-methionine + A + H(+). Its pathway is cofactor biosynthesis; molybdopterin biosynthesis. Its function is as follows. Catalyzes the cyclization of GTP to (8S)-3',8-cyclo-7,8-dihydroguanosine 5'-triphosphate. This is GTP 3',8-cyclase from Microcystis aeruginosa (strain NIES-843 / IAM M-2473).